A 263-amino-acid chain; its full sequence is Indole-3-glycerol phosphate synthase (263 aa).

It belongs to the TrpC family.

The enzyme catalyses 1-(2-carboxyphenylamino)-1-deoxy-D-ribulose 5-phosphate + H(+) = (1S,2R)-1-C-(indol-3-yl)glycerol 3-phosphate + CO2 + H2O. It participates in amino-acid biosynthesis; L-tryptophan biosynthesis; L-tryptophan from chorismate: step 4/5. This Acidithiobacillus ferrooxidans (strain ATCC 23270 / DSM 14882 / CIP 104768 / NCIMB 8455) (Ferrobacillus ferrooxidans (strain ATCC 23270)) protein is Indole-3-glycerol phosphate synthase.